Here is a 473-residue protein sequence, read N- to C-terminus: Tubulin gamma chain (473 aa).

A disordered region spans residues 33-56 (TDGLSQLPDSSTERDDDTKPFFRE). The segment covering 43-56 (STERDDDTKPFFRE) has biased composition (basic and acidic residues). GTP is bound at residue 143-149 (AGGTGSG).

It belongs to the tubulin family. In terms of assembly, interacts with SPC72, SPC97 and SPC98.

It is found in the cytoplasm. It localises to the cytoskeleton. Its subcellular location is the microtubule organizing center. The protein localises to the spindle pole body. Its function is as follows. Tubulin is the major constituent of microtubules. The gamma chain is found at microtubule organizing centers (MTOC) such as the spindle poles or the centrosome, suggesting that it is involved in the minus-end nucleation of microtubule assembly. TUB4 is an important spindle pole body component that organizes both cytoplasmic and nuclear microtubule arrays. This Saccharomyces cerevisiae (strain ATCC 204508 / S288c) (Baker's yeast) protein is Tubulin gamma chain (TUB4).